Here is a 220-residue protein sequence, read N- to C-terminus: Sericin-2 (220 aa).

2 stretches are compositionally biased toward low complexity: residues 1 to 131 and 141 to 155; these read SSST…ASSS and NESS…QNSA. The interval 1 to 220 is disordered; the sequence is SSSTNNSSGS…SSSSSSWSSA (220 aa). The span at 156–165 shows a compositional bias: polar residues; the sequence is TRSQVINADG. Residues 166 to 220 are compositionally biased toward low complexity; the sequence is SQSSSSSSSSASNQASATSSSSVSADGSESESSSSSSSSSSSSSESSSSSSWSSA.

Produced exclusively in the middle (MSG) section of silk glands.

It localises to the secreted. Its function is as follows. Provides the silk fibroin thread with a sticky coating. Acts as a cement by sticking silk threads together. The sequence is that of Sericin-2 (SER2) from Galleria mellonella (Greater wax moth).